Reading from the N-terminus, the 328-residue chain is Phenylalanine--tRNA ligase alpha subunit (328 aa).

It belongs to the class-II aminoacyl-tRNA synthetase family. Phe-tRNA synthetase alpha subunit type 1 subfamily. As to quaternary structure, tetramer of two alpha and two beta subunits. Mg(2+) serves as cofactor.

It localises to the cytoplasm. It catalyses the reaction tRNA(Phe) + L-phenylalanine + ATP = L-phenylalanyl-tRNA(Phe) + AMP + diphosphate + H(+). This is Phenylalanine--tRNA ligase alpha subunit from Buchnera aphidicola subsp. Baizongia pistaciae (strain Bp).